Here is a 282-residue protein sequence, read N- to C-terminus: Benzoyl-CoA reductase subunit D (282 aa).

Positions 130 and 169 each coordinate [4Fe-4S] cluster.

Heterotetramer composed of A, B, C, and D subunits. [4Fe-4S] cluster is required as a cofactor.

The enzyme catalyses cyclohexa-1,5-diene-1-carbonyl-CoA + oxidized 2[4Fe-4S]-[ferredoxin] + 2 ADP + 2 phosphate = reduced 2[4Fe-4S]-[ferredoxin] + benzoyl-CoA + 2 ATP + 2 H2O. It catalyses the reaction 3-hydroxybenzoyl-CoA + AH2 + 2 ATP + 2 H2O = 3-hydroxycyclohexa-1,5-diene-1-carbonyl-CoA + A + 2 ADP + 2 phosphate + 2 H(+). Its function is as follows. Catalyzes the anaerobic reduction of benzoyl-CoA and 3-hydroxybenzoyl-CoA to form cyclohexa-1,5-diene-1-carbonyl-CoA and 3-hydroxycyclohexa-1,5-diene-1-carbonyl-CoA, respectively. The enzyme also reduces other benzoyl-CoA analogs with small substituents at the aromatic ring. In Thauera aromatica, this protein is Benzoyl-CoA reductase subunit D (bcrD).